The sequence spans 228 residues: MVAVSLKMSQPAAPPPPMGERARTRMLLALQSRGIHDPRVLEVMGALPRHDFVDEALAGHAYGDATLPIGEGQTLSQPYTVARMSQALELGYGMHVLEIGTGSGYQTAVLAALCRRVYTVERIPSLALLARERLERMGITNVRYRVGDGTLGWPEPRPFERIIVTAGAPATPERLKRQLEIGGRMIIPEGGKLNQQLICIQRTGPESWQRDVLEACRFVPLVGQQGWE.

The segment at 1-20 is disordered; it reads MVAVSLKMSQPAAPPPPMGE. Residue Ser-76 is part of the active site.

It belongs to the methyltransferase superfamily. L-isoaspartyl/D-aspartyl protein methyltransferase family.

It localises to the cytoplasm. It catalyses the reaction [protein]-L-isoaspartate + S-adenosyl-L-methionine = [protein]-L-isoaspartate alpha-methyl ester + S-adenosyl-L-homocysteine. Its function is as follows. Catalyzes the methyl esterification of L-isoaspartyl residues in peptides and proteins that result from spontaneous decomposition of normal L-aspartyl and L-asparaginyl residues. It plays a role in the repair and/or degradation of damaged proteins. This chain is Protein-L-isoaspartate O-methyltransferase, found in Magnetococcus marinus (strain ATCC BAA-1437 / JCM 17883 / MC-1).